The chain runs to 401 residues: Enolase (401 aa).

Residue Gln154 participates in (2R)-2-phosphoglycerate binding. The active-site Proton donor is the Glu196. Residues Asp232, Glu275, and Asp302 each coordinate Mg(2+). Lys327, Arg356, Ser357, and Lys378 together coordinate (2R)-2-phosphoglycerate. Lys327 serves as the catalytic Proton acceptor.

Belongs to the enolase family. Mg(2+) is required as a cofactor.

It localises to the cytoplasm. The protein localises to the secreted. It is found in the cell surface. It carries out the reaction (2R)-2-phosphoglycerate = phosphoenolpyruvate + H2O. It functions in the pathway carbohydrate degradation; glycolysis; pyruvate from D-glyceraldehyde 3-phosphate: step 4/5. Its function is as follows. Catalyzes the reversible conversion of 2-phosphoglycerate (2-PG) into phosphoenolpyruvate (PEP). It is essential for the degradation of carbohydrates via glycolysis. The sequence is that of Enolase from Haloquadratum walsbyi (strain DSM 16790 / HBSQ001).